We begin with the raw amino-acid sequence, 400 residues long: Cytohesin-2 (400 aa).

Positions 10-67 (DLTPEERMELENIRRRKQELLVEIQRLREELSEAMSEVEGLEANEGSKTLQRNRKMAM) form a coiled coil. Residues 72–201 (FNMDPKKGIQ…VIMLNTSLHN (130 aa)) form the SEC7 domain. One can recognise a PH domain in the interval 259–376 (NPDREGWLLK…WIKSIQAAVS (118 aa)). Residues 268–276 (KLGGGRVKT), R280, Y291, R301, K339, N350, and H351 contribute to the a 1,2-diacyl-sn-glycero-3-phospho-(1D-myo-inositol-3,4,5-trisphosphate) site. A C-terminal autoinhibitory region region spans residues 387 to 395 (RKKRISVKK).

As to quaternary structure, heteromer. Composed of TAMALIN, CYTH2 and at least one GRM1. Interacts with ARRB1. Interacts with ARL4D; the interaction is direct. Directly interacts with CCDC120 through the coiled coil domain; this interaction stabilizes CCDC120, possibly by preventing its ubiquitination, and is required for neurite growth in a neuroblastoma cell line. Interacts with FRMD4A. Interacts (via N-terminal domain) with INAVA (via N-terminal domain). As to expression, present in all tissues tested, with highest protein levels in brain and adrenal.

It localises to the cell membrane. The protein localises to the cytoplasm. The protein resides in the cell projection. It is found in the growth cone. Its subcellular location is the cell junction. It localises to the tight junction. The protein localises to the adherens junction. Acts as a guanine-nucleotide exchange factor (GEF). Promotes guanine-nucleotide exchange on ARF1, ARF3 and ARF6. Activates ARF factors through replacement of GDP with GTP. The cell membrane form, in association with ARL4 proteins, recruits ARF6 to the plasma membrane. Involved in neurite growth. The polypeptide is Cytohesin-2 (Cyth2) (Mus musculus (Mouse)).